The following is a 548-amino-acid chain: MAAKDVKFGNEARIKMLRGVNVLADAVKVTLGPKGRNVVLDKSFGAPSITKDGVSVAREIELEDKFENMGAQMVKEVASKANDAAGDGTTTATLLAQSIVNEGLKAVAAGMNPMDLKRGIDKAVISAVEELKNLSVTCSDSKAITQVGTISANADEKVGSLIAEAMEKVGNDGVITVEEGTGLQDELEVVKGMQFDRGYLSPYFINKSETGIVELENPYILMADKKISNIREMLPILESVAKSGKPLLIISEDLEGEALATLVVNSMRGIVKVAAVKAPGFGDCRKAMLQDISILTNGTVISEELAMELEKSTLEDLGQAKRVVISKDTTTIIGGVGEKHAIQARINQIRQEIQDASSDYDKEKLNERLAKLAGGVAVLKVGAATEVEMKEKKARVEDALHATRAAVEEGVVAGGGVALVRVAGKLSNLRGQNEDQNVGIRVALRAMEAPLRQIVSNSGEEPSAVTNNVKDGKGNYGYNAATDEYGDMIDFGILDPTKVTRSALQYAGSVAGLMITTECMVTDLPKEDKSSDLGSAPAGGMGGMGGMM.

ATP is bound by residues 30–33 (TLGP), K51, 87–91 (DGTTT), G415, 479–481 (NAA), and D495. Residues 526–548 (KEDKSSDLGSAPAGGMGGMGGMM) form a disordered region. Over residues 537–548 (PAGGMGGMGGMM) the composition is skewed to gly residues.

This sequence belongs to the chaperonin (HSP60) family. Forms a cylinder of 14 subunits composed of two heptameric rings stacked back-to-back. Interacts with the co-chaperonin GroES.

The protein resides in the cytoplasm. It carries out the reaction ATP + H2O + a folded polypeptide = ADP + phosphate + an unfolded polypeptide.. Its function is as follows. Together with its co-chaperonin GroES, plays an essential role in assisting protein folding. The GroEL-GroES system forms a nano-cage that allows encapsulation of the non-native substrate proteins and provides a physical environment optimized to promote and accelerate protein folding. The polypeptide is Chaperonin GroEL (Buchnera aphidicola subsp. Pterocomma populeum).